We begin with the raw amino-acid sequence, 533 residues long: Peptide chain release factor 3 (533 aa).

Residues A9–L284 enclose the tr-type G domain. GTP contacts are provided by residues S18–T25, D95–H99, and N149–D152.

This sequence belongs to the TRAFAC class translation factor GTPase superfamily. Classic translation factor GTPase family. PrfC subfamily.

The protein resides in the cytoplasm. In terms of biological role, increases the formation of ribosomal termination complexes and stimulates activities of RF-1 and RF-2. It binds guanine nucleotides and has strong preference for UGA stop codons. It may interact directly with the ribosome. The stimulation of RF-1 and RF-2 is significantly reduced by GTP and GDP, but not by GMP. The chain is Peptide chain release factor 3 from Cupriavidus necator (strain ATCC 17699 / DSM 428 / KCTC 22496 / NCIMB 10442 / H16 / Stanier 337) (Ralstonia eutropha).